The sequence spans 180 residues: MQVKNTEELRRELIELLSEMDVVQRGKFILSSGRESDYYVDIKRAVTEPAVLDVIARLIADAAGEVDRIAGPALGAVPIATAVSLYSRKPLLMIRKEKKGYGTSKLIEGDLQKGDRVAVVEDVTTTGGSLLKAVRAIQENGGIVEKAFVIVDREEGAVDEFKREGITLIPLLSVSDFNHS.

5-phospho-alpha-D-ribose 1-diphosphate contacts are provided by residues arginine 95, lysine 96, lysine 99, and 121 to 129 (EDVTTTGGS). Orotate-binding residues include threonine 125 and arginine 153.

This sequence belongs to the purine/pyrimidine phosphoribosyltransferase family. PyrE subfamily. In terms of assembly, homodimer. The cofactor is Mg(2+).

It carries out the reaction orotidine 5'-phosphate + diphosphate = orotate + 5-phospho-alpha-D-ribose 1-diphosphate. The protein operates within pyrimidine metabolism; UMP biosynthesis via de novo pathway; UMP from orotate: step 1/2. In terms of biological role, catalyzes the transfer of a ribosyl phosphate group from 5-phosphoribose 1-diphosphate to orotate, leading to the formation of orotidine monophosphate (OMP). This chain is Orotate phosphoribosyltransferase, found in Methanothermobacter thermautotrophicus (strain ATCC 29096 / DSM 1053 / JCM 10044 / NBRC 100330 / Delta H) (Methanobacterium thermoautotrophicum).